The sequence spans 350 residues: UDP-3-O-acylglucosamine N-acyltransferase (350 aa).

Histidine 248 serves as the catalytic Proton acceptor.

Belongs to the transferase hexapeptide repeat family. LpxD subfamily. In terms of assembly, homotrimer.

The catalysed reaction is a UDP-3-O-[(3R)-3-hydroxyacyl]-alpha-D-glucosamine + a (3R)-hydroxyacyl-[ACP] = a UDP-2-N,3-O-bis[(3R)-3-hydroxyacyl]-alpha-D-glucosamine + holo-[ACP] + H(+). Its pathway is bacterial outer membrane biogenesis; LPS lipid A biosynthesis. Catalyzes the N-acylation of UDP-3-O-acylglucosamine using 3-hydroxyacyl-ACP as the acyl donor. Is involved in the biosynthesis of lipid A, a phosphorylated glycolipid that anchors the lipopolysaccharide to the outer membrane of the cell. The sequence is that of UDP-3-O-acylglucosamine N-acyltransferase from Nostoc punctiforme (strain ATCC 29133 / PCC 73102).